A 577-amino-acid chain; its full sequence is External alternative NAD(P)H-ubiquinone oxidoreductase B1, mitochondrial (577 aa).

The N-terminal 35 residues, 1–35 (MRGFTYLSKVLHSHSSYSKLLVLCSVSTGGLLVYA), are a transit peptide targeting the mitochondrion. Residue 57–87 (RVVVLGTGWGGTSFLKDVDISSYDVQVVSPR) participates in FAD binding. Residue 221-257 (LHFVIVGGGPTGVEFAAELHDYVYEDLVKIYPSVKDF) participates in NAD(+) binding. Positions 378-413 (KVMEDISTIFEAADKDDSGTLSVEEFRDVLEDIIIR) constitute an EF-hand domain. Asp-391, Asp-393, Ser-395, Thr-397, and Glu-402 together coordinate Ca(2+). A Microbody targeting signal motif is present at residues 568 to 577 (YIFGRDSSRI).

Belongs to the NADH dehydrogenase family. It depends on FAD as a cofactor.

It localises to the mitochondrion inner membrane. The protein localises to the peroxisome. The catalysed reaction is a quinone + NADH + H(+) = a quinol + NAD(+). The enzyme catalyses a ubiquinone + NADH + H(+) = a ubiquinol + NAD(+). Activity is calcium-dependent with a more pronounced effect at higher pH. Its function is as follows. Calcium-dependent NAD(P)H dehydrogenase. Binds calcium ions. Alternative NADH-ubiquinone oxidoreductase which catalyzes the oxidation of mitochondrial NADH does not translocate protons across the inner mitochondrial membrane. This is External alternative NAD(P)H-ubiquinone oxidoreductase B1, mitochondrial (NDB1) from Solanum tuberosum (Potato).